The following is a 496-amino-acid chain: UDP-N-acetylmuramate--L-alanine ligase (496 aa).

122–128 (GTHGKTT) lines the ATP pocket.

Belongs to the MurCDEF family.

It is found in the cytoplasm. The catalysed reaction is UDP-N-acetyl-alpha-D-muramate + L-alanine + ATP = UDP-N-acetyl-alpha-D-muramoyl-L-alanine + ADP + phosphate + H(+). The protein operates within cell wall biogenesis; peptidoglycan biosynthesis. Functionally, cell wall formation. This chain is UDP-N-acetylmuramate--L-alanine ligase, found in Mycobacterium avium (strain 104).